The primary structure comprises 101 residues: MIPGEILTDDGEHELNAGRPTLTVVVANTGDRPVQVGSHYHFFEANDALSFDRAAARGFRLNIAAGTAVRFEPGQTRTVELVELAGERAVYGFQGKVMGPL.

It belongs to the urease beta subunit family. In terms of assembly, heterotrimer of UreA (gamma), UreB (beta) and UreC (alpha) subunits. Three heterotrimers associate to form the active enzyme.

It is found in the cytoplasm. The enzyme catalyses urea + 2 H2O + H(+) = hydrogencarbonate + 2 NH4(+). It participates in nitrogen metabolism; urea degradation; CO(2) and NH(3) from urea (urease route): step 1/1. The chain is Urease subunit beta from Burkholderia ambifaria (strain MC40-6).